The primary structure comprises 134 residues: RxLR effector protein 4 (134 aa).

The N-terminal stretch at 1 to 22 (MRSLFYIAVAVAVFARSSAVAA) is a signal peptide. The tract at residues 43–65 (AMASSDSRKRFLRATDPEDGDLQ) is disordered. Residues 48–58 (DSRKRFLRATD) show a composition bias toward basic and acidic residues. The RxLR-dEER motif lies at 52–71 (RFLRATDPEDGDLQADDEER).

The protein belongs to the RxLR effector family.

The protein localises to the secreted. Effector that enhances plant susceptibility to P.parasitica in Nicotiana benthamiana and Arabidopsis thaliana. Triggers non-specific cell death in a variety of plants, including tobacco, tomato, potato and A.thaliana. E4-induced cell death is dependent on HSP90, NPK and SGT1, suggesting that PpE4 is recognized by the plant immune system. This chain is RxLR effector protein 4, found in Phytophthora nicotianae (strain INRA-310) (Phytophthora parasitica).